The chain runs to 122 residues: Large ribosomal subunit protein uL14 (122 aa).

It belongs to the universal ribosomal protein uL14 family. As to quaternary structure, part of the 50S ribosomal subunit. Forms a cluster with proteins L3 and L19. In the 70S ribosome, L14 and L19 interact and together make contacts with the 16S rRNA in bridges B5 and B8.

Its function is as follows. Binds to 23S rRNA. Forms part of two intersubunit bridges in the 70S ribosome. This chain is Large ribosomal subunit protein uL14, found in Lactococcus lactis subsp. lactis (strain IL1403) (Streptococcus lactis).